Consider the following 241-residue polypeptide: Phosducin-like protein 2 (241 aa).

Positions 34-202 (VLRLQKEAMV…EWKLAEVGAI (169 aa)) constitute a Phosducin domain. Positions 89 to 241 (FGELREISGN…DSSNSDNDTK (153 aa)) are thioredoxin fold.

It belongs to the phosducin family. As to quaternary structure, interacts with the CCT chaperonin complex and actin. Testis-specific.

The protein resides in the endoplasmic reticulum. Functionally, essential for male fertility, spermiogenesis and acrosome formation. The chain is Phosducin-like protein 2 (PDCL2) from Homo sapiens (Human).